The primary structure comprises 272 residues: RELT-like protein 1 (272 aa).

An N-terminal signal peptide occupies residues 1 to 23 (MALWGLPGSAVLAASVFVGGAVS). Residues 24–58 (SPLVAADNTGSHTLHSRAETTPSSPTNNPGNGHPE) lie on the Extracellular side of the membrane. The interval 33–52 (GSHTLHSRAETTPSSPTNNP) is disordered. The helical transmembrane segment at 59-79 (YIAYVLVPVFFVMGLLGVLIC) threads the bilayer. At 80 to 272 (HLLKKKGYRC…PVKRERSDTE (193 aa)) the chain is on the cytoplasmic side. Positions 90–114 (TTEAEQEVEEEKVEKIELNDSINEN) form a coiled coil. A phosphoserine mark is found at Ser110 and Ser115. 2 disordered regions span residues 146 to 171 (DIESPVTPSTPGSPPVSPGPLSPGAT) and 235 to 272 (EHKSNQKERRSLMSVSGIESVNGDVPATPVKRERSDTE). The segment covering 156 to 166 (PGSPPVSPGPL) has biased composition (pro residues). A compositionally biased stretch (basic and acidic residues) spans 235 to 245 (EHKSNQKERRS). A phosphoserine mark is found at Ser245 and Ser248.

The protein belongs to the RELT family. As to quaternary structure, interacts with RELT, RELL2, OXSR1 and PLSCR1.

Its subcellular location is the cell membrane. Induces activation of MAPK14/p38 cascade, when overexpressed. Induces apoptosis, when overexpressed. The polypeptide is RELT-like protein 1 (Rell1) (Mus musculus (Mouse)).